A 297-amino-acid polypeptide reads, in one-letter code: tRNA-cytidine(32) 2-sulfurtransferase (297 aa).

The PP-loop motif signature appears at Ser45–Ser50. Positions 120, 123, and 211 each coordinate [4Fe-4S] cluster.

This sequence belongs to the TtcA family. Homodimer. Mg(2+) serves as cofactor. [4Fe-4S] cluster is required as a cofactor.

The protein localises to the cytoplasm. The catalysed reaction is cytidine(32) in tRNA + S-sulfanyl-L-cysteinyl-[cysteine desulfurase] + AH2 + ATP = 2-thiocytidine(32) in tRNA + L-cysteinyl-[cysteine desulfurase] + A + AMP + diphosphate + H(+). It functions in the pathway tRNA modification. In terms of biological role, catalyzes the ATP-dependent 2-thiolation of cytidine in position 32 of tRNA, to form 2-thiocytidine (s(2)C32). The sulfur atoms are provided by the cysteine/cysteine desulfurase (IscS) system. This chain is tRNA-cytidine(32) 2-sulfurtransferase, found in Vibrio campbellii (strain ATCC BAA-1116).